The sequence spans 528 residues: Tyrosine--tRNA ligase, cytoplasmic (528 aa).

N-acetylmethionine is present on Met1. Residue Gly2 is modified to N-acetylglycine; in Tyrosine--tRNA ligase, cytoplasmic, N-terminally processed. Tyr39 serves as a coordination point for L-tyrosine. Tyr39 lines the trans-resveratrol pocket. Positions 44 to 52 (TTGKPHVAY) match the 'HIGH' region motif. L-tyrosine contacts are provided by Tyr166, Gln170, Asp173, and Gln188. 2 residues coordinate trans-resveratrol: Gln170 and Asp173. The residue at position 197 (Lys197) is an N6-acetyllysine. Ser205 carries the phosphoserine modification. Lys206 carries the N6-acetyllysine modification. The short motif at 222 to 226 (KMSSS) is the 'KMSKS' region element. A Nuclear localization signal motif is present at residues 242 to 247 (KKKLKK). Positions 339 to 363 (AAYPDPSKQKPMAKGPAKNSEPEEV) are disordered. One can recognise a tRNA-binding domain in the interval 364 to 468 (IPSRLDIRVG…AGSAPGEHVF (105 aa)). Ser386 carries the post-translational modification Phosphoserine. An N6-acetyllysine mark is found at Lys474, Lys482, and Lys490.

The protein belongs to the class-I aminoacyl-tRNA synthetase family. In terms of assembly, homodimer. Interacts (when binding to resveratrol) with PARP1; interaction stimulates the poly-ADP-ribosyltransferase activity of PARP1.

The protein localises to the cytoplasm. It is found in the nucleus. The catalysed reaction is tRNA(Tyr) + L-tyrosine + ATP = L-tyrosyl-tRNA(Tyr) + AMP + diphosphate + H(+). Resveratrol strongly inhibits the tyrosine--tRNA ligase activity. In terms of biological role, tyrosine--tRNA ligase that catalyzes the attachment of tyrosine to tRNA(Tyr) in a two-step reaction: tyrosine is first activated by ATP to form Tyr-AMP and then transferred to the acceptor end of tRNA(Tyr). Also acts as a positive regulator of poly-ADP-ribosylation in the nucleus, independently of its tyrosine--tRNA ligase activity. Activity is switched upon resveratrol-binding: resveratrol strongly inhibits the tyrosine--tRNA ligase activity and promotes relocalization to the nucleus, where YARS1 specifically stimulates the poly-ADP-ribosyltransferase activity of PARP1. This Homo sapiens (Human) protein is Tyrosine--tRNA ligase, cytoplasmic.